We begin with the raw amino-acid sequence, 215 residues long: NAD(P)H-hydrate epimerase (215 aa).

Residues 8–212 form the YjeF N-terminal domain; sequence MYNIENKGHD…KIGIPPEAEE (205 aa). 57-61 lines the (6S)-NADPHX pocket; it reads NNGGD. Asparagine 58 and aspartate 124 together coordinate K(+). Residues 128–134, tyrosine 139, and aspartate 157 each bind (6S)-NADPHX; that span reads GTGISGE. A K(+)-binding site is contributed by serine 160.

It belongs to the NnrE/AIBP family. K(+) serves as cofactor.

It catalyses the reaction (6R)-NADHX = (6S)-NADHX. It carries out the reaction (6R)-NADPHX = (6S)-NADPHX. Catalyzes the epimerization of the S- and R-forms of NAD(P)HX, a damaged form of NAD(P)H that is a result of enzymatic or heat-dependent hydration. This is a prerequisite for the S-specific NAD(P)H-hydrate dehydratase to allow the repair of both epimers of NAD(P)HX. This Nitrosopumilus maritimus (strain SCM1) protein is NAD(P)H-hydrate epimerase.